Consider the following 276-residue polypeptide: Protein canopy homolog 3 (276 aa).

A signal peptide spans methionine 1 to alanine 16. The region spanning asparagine 30–leucine 269 is the Saposin B-type domain. 3 disulfides stabilise this stretch: cysteine 32/cysteine 190, cysteine 35/cysteine 178, and cysteine 88/cysteine 150. Residues asparagine 137–glutamate 162 adopt a coiled-coil conformation. Residues alanine 206–leucine 276 form a disordered region. Composition is skewed to basic residues over residues lysine 210 to glycine 219 and lysine 228 to serine 239. Positions lysine 240 to glutamate 252 are enriched in basic and acidic residues.

This sequence belongs to the canopy family.

It localises to the endoplasmic reticulum. In terms of biological role, toll-like receptor (TLR)-specific co-chaperone for HSP90B1. Required for proper TLR folding and hence controls TLR exit from the endoplasmic reticulum. Consequently, required for immune responses. This chain is Protein canopy homolog 3 (cnpy3), found in Danio rerio (Zebrafish).